The sequence spans 48 residues: Sperm protamine P1 (48 aa).

The protein belongs to the protamine P1 family. Testis.

The protein localises to the nucleus. It localises to the chromosome. Its function is as follows. Protamines substitute for histones in the chromatin of sperm during the haploid phase of spermatogenesis. They compact sperm DNA into a highly condensed, stable and inactive complex. The polypeptide is Sperm protamine P1 (PRM1) (Monophyllus redmani (Greater Antillean long-tongued bat)).